The primary structure comprises 316 residues: Protoheme IX farnesyltransferase (316 aa).

The segment at 1–21 is disordered; sequence MAKSQALGNAPLTSTVAENAT. The span at 11 to 21 shows a compositional bias: polar residues; it reads PLTSTVAENAT. Helical transmembrane passes span 42–62, 67–87, 115–135, 136–156, 163–183, 189–209, 235–255, 256–276, and 295–315; these read VVAMLLLTALVGMCLAVPGIP, VILGLIGIGFQSAAAAAFNHV, VVFASTLMVMGFVILLELNAL, TAWLTMASLVGYAVVYTVWLK, IVIGGIAGAAPPLLGWTAVTG, ALLLVMLVFTWTPPHFWALAI, MVLLYTVMLFIVGLLPWLTGM, SGGVYLVGSSLLNLGFIGYAL, and IWHLLALFVVLLGDHWITSLM.

This sequence belongs to the UbiA prenyltransferase family. Protoheme IX farnesyltransferase subfamily.

The protein localises to the cell inner membrane. The enzyme catalyses heme b + (2E,6E)-farnesyl diphosphate + H2O = Fe(II)-heme o + diphosphate. It functions in the pathway porphyrin-containing compound metabolism; heme O biosynthesis; heme O from protoheme: step 1/1. In terms of biological role, converts heme B (protoheme IX) to heme O by substitution of the vinyl group on carbon 2 of heme B porphyrin ring with a hydroxyethyl farnesyl side group. The chain is Protoheme IX farnesyltransferase from Photobacterium profundum (strain SS9).